A 201-amino-acid chain; its full sequence is Regulator of G-protein signaling 1 (201 aa).

One can recognise an RGS domain in the interval 75–191 (SLEKLLVSEE…LKSEIFFRLA (117 aa)).

Its subcellular location is the cell membrane. The protein resides in the cytoplasm. It is found in the cytosol. In terms of biological role, regulates G protein-coupled receptor signaling cascades, including signaling downstream of the N-formylpeptide chemoattractant receptors and leukotriene receptors. Inhibits B cell chemotaxis. Inhibits signal transduction by increasing the GTPase activity of G protein alpha subunits, thereby driving them into their inactive GDP-bound form. This chain is Regulator of G-protein signaling 1 (rgs1), found in Xenopus laevis (African clawed frog).